We begin with the raw amino-acid sequence, 188 residues long: Probable nicotinate-nucleotide adenylyltransferase (188 aa).

This sequence belongs to the NadD family.

The catalysed reaction is nicotinate beta-D-ribonucleotide + ATP + H(+) = deamido-NAD(+) + diphosphate. It functions in the pathway cofactor biosynthesis; NAD(+) biosynthesis; deamido-NAD(+) from nicotinate D-ribonucleotide: step 1/1. Catalyzes the reversible adenylation of nicotinate mononucleotide (NaMN) to nicotinic acid adenine dinucleotide (NaAD). The sequence is that of Probable nicotinate-nucleotide adenylyltransferase from Acholeplasma laidlawii (strain PG-8A).